Consider the following 288-residue polypeptide: B3 domain-containing protein At2g35310 (288 aa).

2 DNA-binding regions (TF-B3) span residues 19 to 114 (FFKV…FMQD) and 196 to 288 (AEFS…VSKP).

It localises to the nucleus. This Arabidopsis thaliana (Mouse-ear cress) protein is B3 domain-containing protein At2g35310.